A 1041-amino-acid polypeptide reads, in one-letter code: MDVMDSFSEVEMPNDISSEDHLLKVIESSAEEVDIFLENCSSLYNLILDSLHNLTSKTISCECLDEMTSTLEKSAKKILAERPEAENSVLLRLNTICCAMDQLRVQHNSRMMSGADSDTASSARSSTSSSTGEMRLWLHEVERRLEINEKRIRVEPNLQLLLSDQQALQLEIQHEGQLLVNRLNKQIKDDHDSDSSEEEKRKTCVDAIRKRWHTIYLNSLSLVCRIEELINHQQASEDSESDPDLVGPPIKRARIRTVGHLTASDTEESEADEEDRHSQTETVVTEDDNVLPFAENEYESIMDGRVTVDSCTSSSEDQMVEQSTNKKWESVLQDVGYSSGENSIHEALNTCADHLVPETSDMRRKRIECSPVKAFYRTVQLEDMSDLEVTKAINHDVEEEPNLSDSMYVNHDSTFLATQNLPEYDEVMALMDDDDLPMDMSMTESFNTKWREIHGQKKPLRRASRPSREQMNLIAKSSCDASSEDSSEGENQTNLEDDPEMMSVSFNSAQFDTSSPLKRQRSARGLKNASFLYDSLEMDGSFCSTRSEMLPPCKTRSLARRKLRVRRMPRSMSDGEQLGVVSSKPEGMMTPMIRVSPPSTPVRRLLRKLDEQIRNRDSDTAPEHSDAAQAYEWDEYNPPQKDDSISDRHIQTMTDISDQLMNIDDDFAEHFGTSSAIRLIEESKSHLRVVLKALEESDSNIPQLSNFELIARSNLRQVDEALKIQSGNQPSFLETSTLQDLRSEWANLYESIRSPFARIMHQVKKFAATLQEVSSMASLGDVDIRSKEDVAKTLDAVTAIERRLSSERQELRDLLASSSFRDVAKDLSCEFESVSEGYDDAVDKIGKMAHSLSQVKGEWDAWNSRQNDIRNAMVRIESHLKEGQMDNKMIADEMELCQERMNSLETMCNYLTASLGSIQNESNSKNLPDFKAELSIYSNALARLKDRFNDMIRVPTPPTVQFHPPEPLPSLARSMTTQTAEMESETENEPLTIAEAISSSRLIKFTFALSLLAALAAIFYYHVFGKPFGPHVTYVNGPPPV.

Disordered stretches follow at residues 258 to 283 (VGHL…TETV), 453 to 498 (IHGQ…LEDD), and 613 to 646 (IRNR…DSIS). Positions 456-465 (QKKPLRRASR) are enriched in basic residues. Basic and acidic residues predominate over residues 613 to 626 (IRNRDSDTAPEHSD). Coiled-coil stretches lie at residues 785–816 (RSKE…DLLA) and 931–951 (KAEL…FNDM). The 56-residue stretch at 986–1041 (TENEPLTIAEAISSSRLIKFTFALSLLAALAAIFYYHVFGKPFGPHVTYVNGPPPV) folds into the KASH domain. The chain crosses the membrane as a helical; Anchor for type IV membrane protein span at residues 1005-1024 (FTFALSLLAALAAIFYYHVF).

As to quaternary structure, component of the unc-83-unc-84 LINC complex which contains at least unc-83 and unc-84. Within the unc-83-unc-84 LINC complex interacts with unc-84 (via C-terminus); the interaction is probably required to recruit unc-83 to the nuclear envelope where it then recruits dynein and kinesin-1 complexes to regulate nuclear migration. Interacts with bicd-1 and dlc-1. Interacts with nud-2 (via C-terminus); the interaction is direct, and is required for recruitment of nud-2 to the nuclear envelope. Interacts with klc-2; the interaction is direct. As to expression, predominantly expressed in migratory nuclei. Expressed in a variety of cell-types, including cells around the pharynx and in the uterus.

It is found in the nucleus membrane. The protein localises to the nucleus outer membrane. Its function is as follows. Cargo-specific adapter that is involved in nuclear migration during development and thereafter. Component of the unc-83-unc-84 LINC (LInker of Nucleoskeleton and Cytoskeleton) complex where it interacts with unc-84 to form a bridge connecting the nuclear envelope to the cytoskeleton which allows for nuclear transport along microtubules. Within the complex, connects the nuclear envelope to the microtubule cytoskeleton through the kinesin-1 light chain protein klc-2 (most likely within the Kinesin 1 motor complex) to regulate nuclear migrations. Moreover, within the complex, also recruits the large microtubule-associated bicd-1-dlc-1-egal-1 and lis-1-nud-2 complexes to the nuclear envelope to regulate both the bidirectional migration of nuclei and the extent of nuclear migrations. Not required for centrosome attachment to the nucleus. In Caenorhabditis elegans, this protein is Nuclear migration protein unc-83.